We begin with the raw amino-acid sequence, 122 residues long: UPF0102 protein NGR_c36770 (122 aa).

It belongs to the UPF0102 family.

This Sinorhizobium fredii (strain NBRC 101917 / NGR234) protein is UPF0102 protein NGR_c36770.